Here is a 424-residue protein sequence, read N- to C-terminus: DNA primase DnaG (424 aa).

A Toprim domain is found at Asp166–Glu241. Mg(2+) is bound by residues Glu172, Asp215, and Asp217.

It belongs to the archaeal DnaG primase family. Forms a ternary complex with MCM helicase and DNA. Component of the archaeal exosome complex. The cofactor is Mg(2+).

It catalyses the reaction ssDNA + n NTP = ssDNA/pppN(pN)n-1 hybrid + (n-1) diphosphate.. RNA polymerase that catalyzes the synthesis of short RNA molecules used as primers for DNA polymerase during DNA replication. Also part of the exosome, which is a complex involved in RNA degradation. Acts as a poly(A)-binding protein that enhances the interaction between heteromeric, adenine-rich transcripts and the exosome. This Staphylothermus marinus (strain ATCC 43588 / DSM 3639 / JCM 9404 / F1) protein is DNA primase DnaG.